A 272-amino-acid chain; its full sequence is 3-methyl-2-oxobutanoate hydroxymethyltransferase (272 aa).

Mg(2+) is bound by residues Asp50 and Asp89. 3-methyl-2-oxobutanoate-binding positions include 50–51 (DS), Asp89, and Lys119. Glu121 contacts Mg(2+). Residue Glu188 is the Proton acceptor of the active site.

It belongs to the PanB family. As to quaternary structure, homodecamer; pentamer of dimers. Mg(2+) is required as a cofactor.

The protein resides in the cytoplasm. The enzyme catalyses 3-methyl-2-oxobutanoate + (6R)-5,10-methylene-5,6,7,8-tetrahydrofolate + H2O = 2-dehydropantoate + (6S)-5,6,7,8-tetrahydrofolate. Its pathway is cofactor biosynthesis; (R)-pantothenate biosynthesis; (R)-pantoate from 3-methyl-2-oxobutanoate: step 1/2. Catalyzes the reversible reaction in which hydroxymethyl group from 5,10-methylenetetrahydrofolate is transferred onto alpha-ketoisovalerate to form ketopantoate. The chain is 3-methyl-2-oxobutanoate hydroxymethyltransferase from Methylobacterium radiotolerans (strain ATCC 27329 / DSM 1819 / JCM 2831 / NBRC 15690 / NCIMB 10815 / 0-1).